The following is a 227-amino-acid chain: DNA repair protein RecO (227 aa).

It belongs to the RecO family.

Functionally, involved in DNA repair and RecF pathway recombination. The sequence is that of DNA repair protein RecO from Pseudomonas entomophila (strain L48).